The following is a 450-amino-acid chain: Keratin, type I cytoskeletal 25 (450 aa).

The interval 1–24 (MSLRLPSGSRRASPRPTTGSLRLS) is disordered. Positions 1 to 78 (MSLRLPSGSR…MNEGGLLSGN (78 aa)) are head. The coil 1A stretch occupies residues 79–114 (EKVTMQNLNDRLASYLENVRALEEANADLEQKIKGW). The region spanning 79 to 394 (EKVTMQNLND…LLIGGDDGAC (316 aa)) is the IF rod domain. Residues 115 to 136 (YEKFGPGSCRGLDHDYSRYFPI) form a linker 1 region. The segment at 137-228 (IEDLKNQIIA…KNHKEEMQVL (92 aa)) is coil 1B. The segment at 229-251 (QCAAGGNVNVEMNAAPGVDLTVL) is linker 12. Residues 252–390 (LNNMRAEYEA…ETYCLLIGGD (139 aa)) form a coil 2 region. Positions 391–450 (DGACKSGGYKSKDYAAGNMGNQMKDPIKAIVVKKVLEEVDQRSKILTTRLHSLEEKSQSN) are tail. The residue at position 442 (Ser-442) is a Phosphoserine.

Belongs to the intermediate filament family. As to quaternary structure, heterodimer of a type I and a type II keratin. Heterodimer with type II keratin KRT5 leading to the formation of keratin intermediate filament (KIF) network. Interacts with KRT6A to form filaments.

Its subcellular location is the cytoplasm. Essential for the proper assembly of type I and type II keratin protein complexes and formation of keratin intermediate filaments in the inner root sheath (irs). Plays a role in the cytoskeleton organization. The polypeptide is Keratin, type I cytoskeletal 25 (Capra hircus (Goat)).